Reading from the N-terminus, the 193-residue chain is MGWVWKDDDEQGGHVNPSAADISPRLDGDRCSTRKVVRTQCKTEEVEPGKFIRKCEKTEEVLRDCVGRPIEVVQSNKEYTEDDVTDQVMKGSVSFGSADNGAFNFPGLQHDIDEIEHNFLGGLSRFFEAAEDMKNGFFSSFGIPHIFDEGPSTSLPSPRREIPIDSPRQLEAFQKAYGTKSGEVDLSGLARDV.

A disordered region spans residues 1–27; the sequence is MGWVWKDDDEQGGHVNPSAADISPRLD.

Interacts with FRAA1E, FRAA2 and FRAA3.

This Fragaria ananassa (Strawberry) protein is Fra a 1-associated protein.